A 581-amino-acid polypeptide reads, in one-letter code: Sulfate adenylyltransferase (581 aa).

An N-terminal region spans residues 1–176 (MANAPHGGVL…VQAIQAPTHF (176 aa)). The catalytic stretch occupies residues 177–401 (DYVPLRYTPA…LRESYPPRPQ (225 aa)). Residue glutamine 204 participates in sulfate binding. ATP is bound by residues 204-207 (QTRN) and 298-301 (GRDH). Catalysis depends on residues threonine 205, arginine 206, and asparagine 207. Residue arginine 206 participates in sulfate binding. A sulfate-binding site is contributed by alanine 302. ATP is bound at residue methionine 340. An allosteric regulation domain; adenylyl-sulfate kinase-like region spans residues 402 to 581 (QGFTILLTGL…IMILESQNLV (180 aa)). Residues 441 to 444 (EELR), 486 to 487 (TA), and arginine 526 contribute to the 3'-phosphoadenylyl sulfate site.

The protein in the N-terminal section; belongs to the sulfate adenylyltransferase family. It in the C-terminal section; belongs to the APS kinase family. In terms of assembly, homohexamer. Dimer of trimers.

It is found in the cytoplasm. It carries out the reaction sulfate + ATP + H(+) = adenosine 5'-phosphosulfate + diphosphate. Its pathway is sulfur metabolism; hydrogen sulfide biosynthesis; sulfite from sulfate: step 1/3. Its activity is regulated as follows. Allosterically inhibited by 3'-phosphoadenosine 5'-phosphosulfate (PAPS). Catalyzes the first intracellular reaction of sulfate assimilation, forming adenosine-5'-phosphosulfate (APS) from inorganic sulfate and ATP. Plays an important role in sulfate activation as a component of the biosynthesis pathway of sulfur-containing amino acids. The polypeptide is Sulfate adenylyltransferase (Cryptococcus neoformans var. grubii serotype A (strain H99 / ATCC 208821 / CBS 10515 / FGSC 9487) (Filobasidiella neoformans var. grubii)).